Consider the following 153-residue polypeptide: Ribosome maturation factor RimP (153 aa).

The protein belongs to the RimP family.

It localises to the cytoplasm. Required for maturation of 30S ribosomal subunits. This is Ribosome maturation factor RimP from Desulforamulus reducens (strain ATCC BAA-1160 / DSM 100696 / MI-1) (Desulfotomaculum reducens).